The chain runs to 365 residues: Ribosomal RNA large subunit methyltransferase M (365 aa).

Residues Ser-187, 220–223, Asp-239, Asp-259, and Asp-276 contribute to the S-adenosyl-L-methionine site; that span reads CPGG. The active-site Proton acceptor is Lys-305.

The protein belongs to the class I-like SAM-binding methyltransferase superfamily. RNA methyltransferase RlmE family. RlmM subfamily. In terms of assembly, monomer.

The protein resides in the cytoplasm. It catalyses the reaction cytidine(2498) in 23S rRNA + S-adenosyl-L-methionine = 2'-O-methylcytidine(2498) in 23S rRNA + S-adenosyl-L-homocysteine + H(+). In terms of biological role, catalyzes the 2'-O-methylation at nucleotide C2498 in 23S rRNA. This is Ribosomal RNA large subunit methyltransferase M from Psychromonas ingrahamii (strain DSM 17664 / CCUG 51855 / 37).